The chain runs to 1770 residues: MESQQLHQNPHSLHGSAYASVTSKEVPSNQDPLAVSASNLPEFDRDSTKVNSQQETTPGTSAVPENHHHVSPQPASVPPPQNGQYQQHGMMTPNKAMASNWAHYQQPSMMTCSHYQTSPAYYQPDPHYPLPQYIPPLSTSSPDPIDSQNQHSEVPQAETKVRNNVLPPHTLTSEENFSTWVKFYIRFLKNSNLGDIIPNDQGEIKSQMTYEEHAYIYNTFQAFAPFHLLPTWVKQILEINYADILTVLCKSVSKMQTNNQELKDWIALANLEYDGSTSADTFEITVSTIIQRLKENNINVSDRLACQLILKGLSGDFKYLRNQYRTKTNMKLSQLFAEIQLIYDENKIMNLNKPSQYKQHSEYKNVSRTSPNTTNTKVTTRNYHRTNSSKPRAAKAHNIATSSKFSRVNNDHINESTVSSQYLSDDNELSLGQQQKESKPTHTIDSNDELPDHLLIDSGASQTLVRSAHYLHHATPNSEINIVDAQKQDIPINAIGNLHFNFQNGTKTSIKALHTPNIAYDLLSLSELANQNITACFTRNTLERSDGTVLAPIVKHGDFYWLSKKYLIPSHISKLTINNVNKSKSVNKYPYPLIHRMLGHANFRSIQKSLKKNAVTYLKESDIEWSNASTYQCPDCLIGKSTKHRHVKGSRLKYQESYEPFQYLHTDIFGPVHHLPKSAPSYFISFTDEKTRFQWVYPLHDRREESILNVFTSILAFIKNQFNARVLVIQMDRGSEYTNKTLHKFFTNRGITACYTTTADSRAHGVAERLNRTLLNDCRTLLHCSGLPNHLWFSAVEFSTIIRNSLVSPKNDKSARQHAGLAGLDITTILPFGQPVIVNNHNPDSKIHPRGIPGYALHPSRNSYGYIIYLPSLKKTVDTTNYVILQDKQSKLDQFNYDTLTFDDDLNRLTAHNQSFIEQNETEQSYDQNTESDHDYQSEIEINSDPLVNDFSSQSINPLQLDKEPVQKVRAPKEVDADISEYNILPSTIRSRTPHIINKESTEMGGTVESDTTSPRHSSTFTARNQNRPGSTNEMIDLTSQDRVNYGLENIKTTRLGGTEEPYIQRNSDTNIKYRTTNSTPSIDDRSSNSESTTPIISIETKAVCDNTPSIDTDPPEYRSSDHATPNIMPDKSSKNVTADSILDDLPLPDLTHKSPTDTSDVSKDIPHIHSRQTNSSLGGMDDSNVLTTTKSKKRSLEDNETEIEVSRDTWNNKNMRSLEPPRSKKRINLIAAIKGVKSIKPVRTTLRYDEAITYNKDNKEKDRYVEAYHKEISQLLKMNTWDTNKYYDRNDIDPKKVINSMFIFNKKRDGTHKARFVARGDIQHPDTYDSDMQSNTVHHYALMTSLSIALDNDYYITQLDISSAYLYADIKEELYIRPPPHLGLNDKLLRLRKSLYGLKQSGANWYETIKSYLINCCDMQEVRGWSCVFKNSQVTICLFVDDMILFSKDLNANKKIITTLKKQYDTKIINLGESDNEIQYDILGLEIKYQRSKYMKLGMEKSLTEKLPKLNVPLNPKGKKLRAPGQPGHYIDQDELEIDEDEYKEKVHEMQKLIGLASYVGYKFRFDLLYYINTLAQHILFPSRQVLDMTYELIQFMWDTRDKQLIWHKNKPTKPDNKLVAISDASYGNQPYYKSQIGNIFLLNGKVIGGKSTKASLTCTSTTEAEIHAVSEAIPLLNNLSHLVQELNKKPIIKGLLTDSRSTISIIKSTNEEKFRNRFFGTKAMRLRDEVSGNNLYVYYIETKKNIADVMTKPLPIKTFKLLTNKWIH.

Composition is skewed to polar residues over residues 1 to 11 (MESQQLHQNPH), 19 to 39 (ASVT…SASN), and 49 to 60 (KVNSQQETTPGT). 2 disordered regions span residues 1 to 86 (MESQ…GQYQ) and 359 to 453 (QHSE…LPDH). Residues 295–397 (ENNINVSDRL…SSKPRAAKAH (103 aa)) form an RNA-binding region. Low complexity predominate over residues 369 to 381 (TSPNTTNTKVTTR). Polar residues-rich tracts occupy residues 399–408 (IATSSKFSRV) and 415–435 (ESTV…GQQQ). Residue D457 is the For protease activity; shared with dimeric partner of the active site. The segment at 579–636 (NVNKSKSVNKYPYPLIHRMLGHANFRSIQKSLKKNAVTYLKESDIEWSNASTYQCPDC) is integrase-type zinc finger-like. An Integrase catalytic domain is found at 656–831 (ESYEPFQYLH…AGLDITTILP (176 aa)). Mg(2+) is bound by residues D667 and D732. Disordered regions lie at residues 1004 to 1034 (MGGT…STNE), 1059 to 1135 (TEEP…KSSK), 1146 to 1165 (LPLP…VSKD), and 1170 to 1205 (HSRQ…TEIE). Composition is skewed to polar residues over residues 1009-1034 (ESDT…STNE) and 1065-1082 (QRNS…STPS). Residues 1151-1165 (LTHKSPTDTSDVSKD) are compositionally biased toward basic and acidic residues. The Bipartite nuclear localization signal motif lies at 1193–1227 (KKRSLEDNETEIEVSRDTWNNKNMRSLEPPRSKKR). Residues 1353–1491 (NDYYITQLDI…DILGLEIKYQ (139 aa)) form the Reverse transcriptase Ty1/copia-type domain. Residues D1361, D1442, D1443, D1625, E1667, and D1700 each contribute to the Mg(2+) site. One can recognise an RNase H Ty1/copia-type domain in the interval 1625–1767 (DASYGNQPYY…IKTFKLLTNK (143 aa)).

In terms of assembly, the capsid protein forms a homotrimer, from which the VLPs are assembled. The protease is a homodimer, whose active site consists of two apposed aspartic acid residues. In terms of processing, initially, virus-like particles (VLPs) are composed of the structural unprocessed proteins Gag and Gag-Pol, and also contain the host initiator methionine tRNA (tRNA(i)-Met) which serves as a primer for minus-strand DNA synthesis, and a dimer of genomic Ty RNA. Processing of the polyproteins occurs within the particle and proceeds by an ordered pathway, called maturation. First, the protease (PR) is released by autocatalytic cleavage of the Gag-Pol polyprotein, and this cleavage is a prerequisite for subsequent processing at the remaining sites to release the mature structural and catalytic proteins. Maturation takes place prior to the RT reaction and is required to produce transposition-competent VLPs.

It localises to the cytoplasm. It is found in the nucleus. The catalysed reaction is DNA(n) + a 2'-deoxyribonucleoside 5'-triphosphate = DNA(n+1) + diphosphate. It carries out the reaction Endonucleolytic cleavage to 5'-phosphomonoester.. Functionally, capsid protein (CA) is the structural component of the virus-like particle (VLP), forming the shell that encapsulates the retrotransposons dimeric RNA genome. The particles are assembled from trimer-clustered units and there are holes in the capsid shells that allow for the diffusion of macromolecules. CA also has nucleocapsid-like chaperone activity, promoting primer tRNA(i)-Met annealing to the multipartite primer-binding site (PBS), dimerization of Ty2 RNA and initiation of reverse transcription. Its function is as follows. The aspartyl protease (PR) mediates the proteolytic cleavages of the Gag and Gag-Pol polyproteins after assembly of the VLP. Reverse transcriptase/ribonuclease H (RT) is a multifunctional enzyme that catalyzes the conversion of the retro-elements RNA genome into dsDNA within the VLP. The enzyme displays a DNA polymerase activity that can copy either DNA or RNA templates, and a ribonuclease H (RNase H) activity that cleaves the RNA strand of RNA-DNA heteroduplexes during plus-strand synthesis and hydrolyzes RNA primers. The conversion leads to a linear dsDNA copy of the retrotransposon that includes long terminal repeats (LTRs) at both ends. In terms of biological role, integrase (IN) targets the VLP to the nucleus, where a subparticle preintegration complex (PIC) containing at least integrase and the newly synthesized dsDNA copy of the retrotransposon must transit the nuclear membrane. Once in the nucleus, integrase performs the integration of the dsDNA into the host genome. This is Transposon Ty2-F Gag-Pol polyprotein (TY2B-F) from Saccharomyces cerevisiae (strain ATCC 204508 / S288c) (Baker's yeast).